We begin with the raw amino-acid sequence, 183 residues long: Anterior gradient protein 1 (183 aa).

Positions 1-18 are cleaved as a signal peptide; that stretch reads MQAGLSLVCLVLLCSALG.

Belongs to the AGR family. From stage 18 (neurula) onward, expressed in the cement gland until it degenerates. More weakly expressed in the adjacent hatching gland.

The protein resides in the secreted. Functionally, does not appear to be required for cement gland formation. The chain is Anterior gradient protein 1 (ag1) from Xenopus laevis (African clawed frog).